Here is a 186-residue protein sequence, read N- to C-terminus: MNDCSRCAGSTSSGPTHWSGRIRDIADFPKPGIVFKDITPLLSDGPDFASALDEMAQPWRTTPLDAVLGIEARGFILGAALARELRTGFVPVRKPGKLPGRTLIQEYALEYGTDRIEMHEDALPRGARVLIVDDVLATGGTLRAALGLAAQLELEIVGAAVLVELLALQGRSKWLNDVPLLATLSY.

Belongs to the purine/pyrimidine phosphoribosyltransferase family. Homodimer.

The protein resides in the cytoplasm. The catalysed reaction is AMP + diphosphate = 5-phospho-alpha-D-ribose 1-diphosphate + adenine. It participates in purine metabolism; AMP biosynthesis via salvage pathway; AMP from adenine: step 1/1. Its function is as follows. Catalyzes a salvage reaction resulting in the formation of AMP, that is energically less costly than de novo synthesis. The sequence is that of Adenine phosphoribosyltransferase from Xanthomonas campestris pv. campestris (strain B100).